A 118-amino-acid polypeptide reads, in one-letter code: Large ribosomal subunit protein uL24c (118 aa).

The protein belongs to the universal ribosomal protein uL24 family. In terms of assembly, part of the 50S ribosomal subunit.

Its subcellular location is the plastid. The protein localises to the organellar chromatophore. In terms of biological role, one of two assembly initiator proteins, it binds directly to the 5'-end of the 23S rRNA, where it nucleates assembly of the 50S subunit. This chain is Large ribosomal subunit protein uL24c (rpl24), found in Paulinella chromatophora.